The following is a 584-amino-acid chain: Aspartate--tRNA(Asp/Asn) ligase (584 aa).

Position 177 (Glu177) interacts with L-aspartate. Residues 201 to 204 are aspartate; that stretch reads QLFK. Residue Arg223 coordinates L-aspartate. ATP-binding positions include 223 to 225 and Gln232; that span reads RDE. His447 contacts L-aspartate. Glu481 lines the ATP pocket. Arg488 lines the L-aspartate pocket. Position 533 to 536 (533 to 536) interacts with ATP; the sequence is GLDR.

Belongs to the class-II aminoacyl-tRNA synthetase family. Type 1 subfamily. As to quaternary structure, homodimer.

Its subcellular location is the cytoplasm. It catalyses the reaction tRNA(Asx) + L-aspartate + ATP = L-aspartyl-tRNA(Asx) + AMP + diphosphate. Its function is as follows. Aspartyl-tRNA synthetase with relaxed tRNA specificity since it is able to aspartylate not only its cognate tRNA(Asp) but also tRNA(Asn). Reaction proceeds in two steps: L-aspartate is first activated by ATP to form Asp-AMP and then transferred to the acceptor end of tRNA(Asp/Asn). The protein is Aspartate--tRNA(Asp/Asn) ligase of Chlamydia caviae (strain ATCC VR-813 / DSM 19441 / 03DC25 / GPIC) (Chlamydophila caviae).